The sequence spans 554 residues: Estrogen receptor beta (554 aa).

A modulating region spans residues 25–173; the sequence is TEIKNSPAGV…NPGSKKDAHF (149 aa). NR C4-type zinc fingers lie at residues 174-194 and 210-234; these read CAVC…CEGC and CPAT…LRKC. The nuclear receptor DNA-binding region spans 174 to 239; sequence CAVCSDYASG…RLRKCYEVGM (66 aa). Positions 289–521 constitute an NR LBD domain; it reads SPEQFVLTLL…DLLLEMLNAH (233 aa). The segment at 529 to 554 is disordered; the sequence is PLATHPEFGPLEQMEPGESLRKGEPQ.

This sequence belongs to the nuclear hormone receptor family. NR3 subfamily. In terms of assembly, binds DNA as a homodimer. Can form a heterodimer with ER-alpha. As to expression, brain, pituitary, skeletal muscle, liver, adrenal, kidney, intestine and ovary.

The protein resides in the nucleus. In terms of biological role, binds estrogens with an affinity similar to that of ER-alpha, and activates expression of reporter genes containing estrogen response elements (ERE) in an estrogen-dependent manner. Locally synthesized estrogens may act via ER beta, in addition to ER alpha, to mediate seasonal or developmental effects on nearby song nuclei. This chain is Estrogen receptor beta (ESR2), found in Sturnus vulgaris (Starling).